Consider the following 659-residue polypeptide: Alpha-amylase (659 aa).

The first 27 residues, 1–27 (MFAKRFKTSLLPLFAGFLLLFHLVLAG), serve as a signal peptide directing secretion. The propeptide occupies 28-41 (PAAASAETANKSNE). Ca(2+) is bound by residues asparagine 142, threonine 178, aspartate 187, glycine 210, and aspartate 212. The active-site Nucleophile is the aspartate 217. Ca(2+) is bound at residue histidine 221. Glutamate 249 acts as the Proton donor in catalysis.

Belongs to the glycosyl hydrolase 13 family. Monomer. Ca(2+) serves as cofactor.

It is found in the secreted. The enzyme catalyses Endohydrolysis of (1-&gt;4)-alpha-D-glucosidic linkages in polysaccharides containing three or more (1-&gt;4)-alpha-linked D-glucose units.. This is Alpha-amylase (amyE) from Bacillus subtilis (strain 168).